We begin with the raw amino-acid sequence, 402 residues long: Iripin-8 (402 aa).

The first 16 residues, 1–16 (MTRLLWLFAAITASLA), serve as a signal peptide directing secretion. N-linked (GlcNAc...) asparagine glycosylation is found at Asn-164 and Asn-230.

This sequence belongs to the serpin family. Interacts with host thrombin/F2. Interacts with host coagulation factor VII/F7 (activated). Interacts with host coagulation factor X/F10 (activated). Interacts with host coagulation factor XII/F12 (activated). Interacts with host coagulation factor IX/F9 (activated). Interacts with host plasmin/PLG. Interacts with host protein C/PROC (activated). In terms of tissue distribution, saliva (at protein level). Salivary gland. Midgut. Low-level expression in ovary.

The protein localises to the secreted. Functionally, serine protease inhibitor that modulates blood feeding of ticks on vertebrate species. Inhibits the intrinsic and common pathways of blood coagulation in the host. Inhibits host thrombin, factor VIIa, factor Xa, factor XIa, factor XIIa, plasmin and activated protein C. Inhibits host trypsin and kallikrein. Reduces host complement activity. Does not affect proliferation of CD4+ T-cells and neutrophil migration. The sequence is that of Iripin-8 from Ixodes ricinus (Common tick).